Here is a 210-residue protein sequence, read N- to C-terminus: Thymidylate kinase (210 aa).

Residue 9–16 coordinates ATP; the sequence is GLEGAGKS.

The protein belongs to the thymidylate kinase family.

The catalysed reaction is dTMP + ATP = dTDP + ADP. Phosphorylation of dTMP to form dTDP in both de novo and salvage pathways of dTTP synthesis. This is Thymidylate kinase from Aliivibrio salmonicida (strain LFI1238) (Vibrio salmonicida (strain LFI1238)).